The sequence spans 66 residues: DNA gyrase inhibitor YacG (66 aa).

Zn(2+) is bound by residues C9, C12, C28, and C32. The disordered stretch occupies residues 45-66 (HKIAGSQESEDELYSGDLEPRH).

This sequence belongs to the DNA gyrase inhibitor YacG family. As to quaternary structure, interacts with GyrB. Requires Zn(2+) as cofactor.

Functionally, inhibits all the catalytic activities of DNA gyrase by preventing its interaction with DNA. Acts by binding directly to the C-terminal domain of GyrB, which probably disrupts DNA binding by the gyrase. The chain is DNA gyrase inhibitor YacG from Pseudomonas putida (strain W619).